The following is a 370-amino-acid chain: Cobalt-precorrin-5B C(1)-methyltransferase (370 aa).

The protein belongs to the CbiD family.

It catalyses the reaction Co-precorrin-5B + S-adenosyl-L-methionine = Co-precorrin-6A + S-adenosyl-L-homocysteine. It participates in cofactor biosynthesis; adenosylcobalamin biosynthesis; cob(II)yrinate a,c-diamide from sirohydrochlorin (anaerobic route): step 6/10. Its function is as follows. Catalyzes the methylation of C-1 in cobalt-precorrin-5B to form cobalt-precorrin-6A. This is Cobalt-precorrin-5B C(1)-methyltransferase from Pseudomonas savastanoi pv. phaseolicola (strain 1448A / Race 6) (Pseudomonas syringae pv. phaseolicola (strain 1448A / Race 6)).